A 429-amino-acid polypeptide reads, in one-letter code: Adenylosuccinate synthetase (429 aa).

GTP contacts are provided by residues 12–18 and 40–42; these read GDEGKGK and GHT. Catalysis depends on Asp13, which acts as the Proton acceptor. 2 residues coordinate Mg(2+): Asp13 and Gly40. Residues 13 to 16, 38 to 41, Thr129, Arg143, Gln223, Thr238, and Arg302 each bind IMP; these read DEGK and NAGH. His41 functions as the Proton donor in the catalytic mechanism. 298-304 is a substrate binding site; sequence VVTGRKR. Residues Arg304, 330–332, and 412–414 each bind GTP; these read KLD and STS.

Belongs to the adenylosuccinate synthetase family. In terms of assembly, homodimer. Mg(2+) serves as cofactor.

Its subcellular location is the cytoplasm. It carries out the reaction IMP + L-aspartate + GTP = N(6)-(1,2-dicarboxyethyl)-AMP + GDP + phosphate + 2 H(+). Its pathway is purine metabolism; AMP biosynthesis via de novo pathway; AMP from IMP: step 1/2. Plays an important role in the de novo pathway of purine nucleotide biosynthesis. Catalyzes the first committed step in the biosynthesis of AMP from IMP. This Bartonella henselae (strain ATCC 49882 / DSM 28221 / CCUG 30454 / Houston 1) (Rochalimaea henselae) protein is Adenylosuccinate synthetase.